Consider the following 265-residue polypeptide: Indole-3-glycerol phosphate synthase (265 aa).

The protein belongs to the TrpC family.

The catalysed reaction is 1-(2-carboxyphenylamino)-1-deoxy-D-ribulose 5-phosphate + H(+) = (1S,2R)-1-C-(indol-3-yl)glycerol 3-phosphate + CO2 + H2O. Its pathway is amino-acid biosynthesis; L-tryptophan biosynthesis; L-tryptophan from chorismate: step 4/5. In Syntrophobacter fumaroxidans (strain DSM 10017 / MPOB), this protein is Indole-3-glycerol phosphate synthase.